The following is a 226-amino-acid chain: MKMETFLVCLFHNAAGLHQQIQEILYLLRMHIYETNLYLKQELSRLIYPNRQLSFVLLMPLSLLRNWDDIEYLTDIVDDKQTLHYAANLLTIYVLHLSMYQKLTKPYFLLAVKRVSEKLNKKQRHSFYEVLVTSETLNNYENLPKNILNTLMFAVRYVFKPTPNYSEIIAELEKKNKIHHIIFNMVITDFQQIREQHMCKHLCETNNELRQECKEIIFDLKVVGNV.

The first 16 residues, 1–16 (MKMETFLVCLFHNAAG), serve as a signal peptide directing secretion. Asn164 carries N-linked (GlcNAc...) asparagine; by host glycosylation.

Belongs to the asfivirus I226R family.

In terms of biological role, plays a role in the inhibition of host NF-kappa-B and IRF3 signaling pathways. Mechanistically, promotes the degradation of host IKBKG through enhancing its ubiquitination leading to inhibition of both pathways. In African swine fever virus (isolate Pig/Kenya/KEN-50/1950) (ASFV), this protein is Late protein I226R.